The following is a 293-amino-acid chain: Nucleotide-binding protein BA_5384/GBAA_5384/BAS5004 (293 aa).

14–21 (GMSGAGKT) is an ATP binding site. 65-68 (DLRG) is a GTP binding site.

It belongs to the RapZ-like family.

Functionally, displays ATPase and GTPase activities. This chain is Nucleotide-binding protein BA_5384/GBAA_5384/BAS5004, found in Bacillus anthracis.